The chain runs to 246 residues: E3 ubiquitin-protein ligase MARCHF2 (246 aa).

Residues 56-116 (DSQSDCPFCR…ELCHTEFAVE (61 aa)) form an RING-CH-type zinc finger. The Zn(2+) site is built by C64, C67, C80, C82, H90, C93, C106, and C109. A required for interaction with IKBKG region spans residues 121–246 (PLTEWLKDPG…LKKVAEETPV (126 aa)). The next 2 helical transmembrane spans lie at 138–158 (LCCD…SGWL) and 175–195 (AVGL…WTLV).

As to quaternary structure, interacts with STX6; the interaction promotes MARCHF2-mediated ubiquitination and degradation of CFTR. Interacts with MARCHF3. Interacts with GOPC/CAL; the interaction leads to CFTR ubiquitination and degradation. Interacts with CFTR; the interaction leads to CFTR ubiqtuitination and degradation. Interacts (via PDZ domain) with DLG1 (via PDZ domains); the interaction leads to DLG1 ubiqtuitination and degradation. Interacts with ERGIC3. Interacts with ADRB2. Interacts with IKBKG/NEMO; during the late stages of macrophage viral and bacterial infection; the interaction leads to ubiquitination and degradation of IKBKG/NEMO.

It is found in the endoplasmic reticulum membrane. The protein localises to the lysosome membrane. Its subcellular location is the endosome membrane. It localises to the golgi apparatus membrane. The protein resides in the cytoplasm. It is found in the cell membrane. It carries out the reaction S-ubiquitinyl-[E2 ubiquitin-conjugating enzyme]-L-cysteine + [acceptor protein]-L-lysine = [E2 ubiquitin-conjugating enzyme]-L-cysteine + N(6)-ubiquitinyl-[acceptor protein]-L-lysine.. Its pathway is protein modification; protein ubiquitination. Its function is as follows. E3 ubiquitin-protein ligase that may mediate ubiquitination of TFRC and CD86, and promote their subsequent endocytosis and sorting to lysosomes via multivesicular bodies. E3 ubiquitin ligases accept ubiquitin from an E2 ubiquitin-conjugating enzyme in the form of a thioester and then directly transfer the ubiquitin to targeted substrates. Together with GOPC/CAL mediates the ubiquitination and lysosomal degradation of CFTR. Ubiquitinates and therefore mediates the degradation of DLG1. Regulates the intracellular trafficking and secretion of alpha1-antitrypsin/SERPINA1 and HP/haptoglobin via ubiquitination and degradation of the cargo receptor ERGIC3. Negatively regulates the antiviral and antibacterial immune response by repression of the NF-kB and type 1 IFN signaling pathways, via MARCHF2-mediated K48-linked polyubiquitination of IKBKG/NEMO, resulting in its proteasomal degradation. May be involved in endosomal trafficking through interaction with STX6. The sequence is that of E3 ubiquitin-protein ligase MARCHF2 (Marchf2) from Mus musculus (Mouse).